The following is a 264-amino-acid chain: H-2 class II histocompatibility antigen, I-A beta chain (264 aa).

Positions 1–31 are cleaved as a signal peptide; it reads MVWLPRVPCVAAVILLLTVLSPPVALVRDSR. The tract at residues 32-121 is beta-1; that stretch reads PWFLEYCKSE…IFDNFLVPRR (90 aa). At 32 to 225 the chain is on the extracellular side; sequence PWFLEYCKSE…KAQSTSAQNK (194 aa). Intrachain disulfides connect Cys-42-Cys-106 and Cys-144-Cys-200. The N-linked (GlcNAc...) asparagine glycan is linked to Asn-46. The tract at residues 122–215 is beta-2; the sequence is VEPTVTVYPT…SLTDPVTVEW (94 aa). An Ig-like C1-type domain is found at 124–214; it reads PTVTVYPTKT…PSLTDPVTVE (91 aa). The tract at residues 216-225 is connecting peptide; the sequence is KAQSTSAQNK. The chain crosses the membrane as a helical span at residues 226-248; that stretch reads MLSGVGGFVLGLLFLRAGLFIYF. Residues 249-264 lie on the Cytoplasmic side of the membrane; the sequence is RNQKGQSGLQPTGLLS.

It belongs to the MHC class II family. Post-translationally, ubiquitinated in immature dendritic cells leading to down-regulation of MHC class II.

The protein resides in the membrane. This Mus musculus (Mouse) protein is H-2 class II histocompatibility antigen, I-A beta chain (H2-Eb1).